A 361-amino-acid polypeptide reads, in one-letter code: Peptide chain release factor 1 (361 aa).

The residue at position 235 (Q235) is an N5-methylglutamine.

The protein belongs to the prokaryotic/mitochondrial release factor family. In terms of processing, methylated by PrmC. Methylation increases the termination efficiency of RF1.

The protein resides in the cytoplasm. Functionally, peptide chain release factor 1 directs the termination of translation in response to the peptide chain termination codons UAG and UAA. The sequence is that of Peptide chain release factor 1 from Chlamydia abortus (strain DSM 27085 / S26/3) (Chlamydophila abortus).